The following is a 130-amino-acid chain: Small ribosomal subunit protein uS8 (130 aa).

It belongs to the universal ribosomal protein uS8 family. As to quaternary structure, part of the 30S ribosomal subunit. Contacts proteins S5 and S12.

Its function is as follows. One of the primary rRNA binding proteins, it binds directly to 16S rRNA central domain where it helps coordinate assembly of the platform of the 30S subunit. The polypeptide is Small ribosomal subunit protein uS8 (Acidiphilium cryptum (strain JF-5)).